Consider the following 328-residue polypeptide: Stress response kinase A (328 aa).

The Proton acceptor role is filled by Asp201. 2 residues coordinate Mg(2+): Asn206 and Asp217. Asp217 is a catalytic residue.

Belongs to the SrkA/RdoA protein kinase family. As to quaternary structure, monomer. Mg(2+) is required as a cofactor.

Its subcellular location is the cytoplasm. It catalyses the reaction L-seryl-[protein] + ATP = O-phospho-L-seryl-[protein] + ADP + H(+). It carries out the reaction L-threonyl-[protein] + ATP = O-phospho-L-threonyl-[protein] + ADP + H(+). Functionally, a protein kinase that phosphorylates Ser and Thr residues. Probably acts to suppress the effects of stress linked to accumulation of reactive oxygen species. Probably involved in the extracytoplasmic stress response. The chain is Stress response kinase A from Escherichia coli O6:H1 (strain CFT073 / ATCC 700928 / UPEC).